The sequence spans 755 residues: 1,4-alpha-glucan branching enzyme GlgB (755 aa).

Residue aspartate 431 is the Nucleophile of the active site. The active-site Proton donor is glutamate 484.

It belongs to the glycosyl hydrolase 13 family. GlgB subfamily. In terms of assembly, monomer.

The catalysed reaction is Transfers a segment of a (1-&gt;4)-alpha-D-glucan chain to a primary hydroxy group in a similar glucan chain.. It participates in glycan biosynthesis; glycogen biosynthesis. Functionally, catalyzes the formation of the alpha-1,6-glucosidic linkages in glycogen by scission of a 1,4-alpha-linked oligosaccharide from growing alpha-1,4-glucan chains and the subsequent attachment of the oligosaccharide to the alpha-1,6 position. The chain is 1,4-alpha-glucan branching enzyme GlgB from Prochlorococcus marinus (strain NATL1A).